We begin with the raw amino-acid sequence, 158 residues long: Transcription elongation factor GreA (158 aa).

It belongs to the GreA/GreB family.

In terms of biological role, necessary for efficient RNA polymerase transcription elongation past template-encoded arresting sites. The arresting sites in DNA have the property of trapping a certain fraction of elongating RNA polymerases that pass through, resulting in locked ternary complexes. Cleavage of the nascent transcript by cleavage factors such as GreA or GreB allows the resumption of elongation from the new 3'terminus. GreA releases sequences of 2 to 3 nucleotides. In Pelobacter propionicus (strain DSM 2379 / NBRC 103807 / OttBd1), this protein is Transcription elongation factor GreA.